The chain runs to 271 residues: 4-hydroxy-tetrahydrodipicolinate reductase (271 aa).

NAD(+) is bound by residues 10–15, glutamate 36, 100–102, and 124–127; these read GAGGRM, GTT, and SGNM. Catalysis depends on histidine 157, which acts as the Proton donor/acceptor. Histidine 158 contacts (S)-2,3,4,5-tetrahydrodipicolinate. Lysine 161 functions as the Proton donor in the catalytic mechanism. 167–168 provides a ligand contact to (S)-2,3,4,5-tetrahydrodipicolinate; it reads GT.

This sequence belongs to the DapB family.

Its subcellular location is the cytoplasm. The enzyme catalyses (S)-2,3,4,5-tetrahydrodipicolinate + NAD(+) + H2O = (2S,4S)-4-hydroxy-2,3,4,5-tetrahydrodipicolinate + NADH + H(+). It catalyses the reaction (S)-2,3,4,5-tetrahydrodipicolinate + NADP(+) + H2O = (2S,4S)-4-hydroxy-2,3,4,5-tetrahydrodipicolinate + NADPH + H(+). It functions in the pathway amino-acid biosynthesis; L-lysine biosynthesis via DAP pathway; (S)-tetrahydrodipicolinate from L-aspartate: step 4/4. In terms of biological role, catalyzes the conversion of 4-hydroxy-tetrahydrodipicolinate (HTPA) to tetrahydrodipicolinate. This Rhodopseudomonas palustris (strain ATCC BAA-98 / CGA009) protein is 4-hydroxy-tetrahydrodipicolinate reductase.